We begin with the raw amino-acid sequence, 574 residues long: (R)-mandelonitrile lyase 4 (574 aa).

An N-terminal signal peptide occupies residues Met-1–Ser-27. Asn-30 carries N-linked (GlcNAc...) asparagine glycosylation. Position 64–65 (Thr-64–Ser-65) interacts with FAD. N-linked (GlcNAc...) asparagine glycosylation is present at Asn-76. Residues Glu-83–Arg-84, Thr-134, and Asn-138–Val-141 each bind FAD. 3 N-linked (GlcNAc...) asparagine glycosylation sites follow: Asn-146, Asn-151, and Asn-179. Residue Val-245 participates in FAD binding. 2 N-linked (GlcNAc...) asparagine glycosylation sites follow: Asn-268 and Asn-310. Cys-357 is a binding site for substrate. Residues Asn-381, Asn-407, and Asn-468 are each glycosylated (N-linked (GlcNAc...) asparagine). An intrachain disulfide couples Cys-428 to Cys-479. Tyr-486 provides a ligand contact to substrate. Residues Trp-487–His-488 and Gly-516 each bind FAD. His-488 (proton donor) is an active-site residue. His-526 (proton acceptor) is an active-site residue. An FAD-binding site is contributed by Pro-527–Gln-528.

It belongs to the GMC oxidoreductase family. In terms of assembly, monomer. FAD is required as a cofactor.

Its subcellular location is the vacuole. The protein resides in the aleurone grain. The enzyme catalyses (R)-mandelonitrile = benzaldehyde + hydrogen cyanide. In terms of biological role, involved in cyanogenesis, the release of HCN from injured tissues. Catalyzes the stereospecific addition of HCN to a variety of aldehydes in vitro. It is a major seed constituent, and could have the additional role of a storage form for reduced nitrogen. The sequence is that of (R)-mandelonitrile lyase 4 (MDL4) from Prunus serotina (Black cherry).